A 603-amino-acid chain; its full sequence is Elongation factor 4 (603 aa).

Residues 2-184 (NHIRNFSIIA…AVIARVPPPK (183 aa)) form the tr-type G domain. GTP contacts are provided by residues 14–19 (DHGKST) and 131–134 (NKMD).

The protein belongs to the TRAFAC class translation factor GTPase superfamily. Classic translation factor GTPase family. LepA subfamily.

The protein localises to the cell inner membrane. The enzyme catalyses GTP + H2O = GDP + phosphate + H(+). Its function is as follows. Required for accurate and efficient protein synthesis under certain stress conditions. May act as a fidelity factor of the translation reaction, by catalyzing a one-codon backward translocation of tRNAs on improperly translocated ribosomes. Back-translocation proceeds from a post-translocation (POST) complex to a pre-translocation (PRE) complex, thus giving elongation factor G a second chance to translocate the tRNAs correctly. Binds to ribosomes in a GTP-dependent manner. This chain is Elongation factor 4, found in Polaromonas sp. (strain JS666 / ATCC BAA-500).